A 207-amino-acid chain; its full sequence is Protein GET1 (207 aa).

Residues 1 to 4 lie on the Lumenal side of the membrane; sequence MPSL. The chain crosses the membrane as a helical span at residues 5–24; sequence LISVLFLHIAIYIINTIAAS. The Cytoplasmic segment spans residues 25–110; the sequence is TIDSLLWLIY…FFDVAVKALR (86 aa). Positions 44–97 form a coiled coil; the sequence is IAREQHQMKLEVVQLKREMNATSSQDEFAKWAKLRRRHDKALEEYEVKNKQFSR. Residues 111-131 traverse the membrane as a helical segment; that stretch reads WAGTSGLIVFLQFWFSKTPIF. Over 132 to 155 the chain is Lumenal; the sequence is TLPPSWIPWQVEWVLSFPRAPMGT. The chain crosses the membrane as a helical span at residues 156-172; it reads VSIQVWGGACAVVVALI. Residues 173-207 are Cytoplasmic-facing; the sequence is GEAIGATVRYLYASKDSMEAIKVGAGAVEKEKKRQ.

This sequence belongs to the WRB/GET1 family. Interacts with GET3.

It localises to the endoplasmic reticulum membrane. Its function is as follows. Required for the post-translational delivery of tail-anchored (TA) proteins to the endoplasmic reticulum. Acts as a membrane receptor for soluble GET3, which recognizes and selectively binds the transmembrane domain of TA proteins in the cytosol. This Paracoccidioides brasiliensis (strain Pb18) protein is Protein GET1.